Consider the following 410-residue polypeptide: Monoglucosyldiacylglycerol epimerase (410 aa).

A signal peptide spans 1 to 14 (MAMAWLMGLGLALA). The next 2 helical transmembrane spans lie at 71–91 (ALVM…WQGF) and 96–116 (LILA…SAIA). The Proton acceptor role is filled by Tyr320. The chain crosses the membrane as a helical span at residues 380-400 (IIVTINPITFIAFPVKEFFVS).

The protein belongs to the short-chain dehydrogenases/reductases (SDR) family.

The protein localises to the membrane. It carries out the reaction a 1,2-diacyl-3-O-(beta-D-glucopyranosyl)-sn-glycerol = a 1,2-diacyl-3-O-(beta-D-galactosyl)-sn-glycerol. Involved in the biosynthesis of galactolipids found in the photosynthetic membranes. Catalyzes the isomerization of monoglucosyldiacylglycerol (GlcDG) to yield monogalactosyldiacylglycerol (MGDG). This is Monoglucosyldiacylglycerol epimerase from Synechocystis sp. (strain ATCC 27184 / PCC 6803 / Kazusa).